The chain runs to 142 residues: Transcription antitermination protein NusB (142 aa).

The protein belongs to the NusB family.

Its function is as follows. Involved in transcription antitermination. Required for transcription of ribosomal RNA (rRNA) genes. Binds specifically to the boxA antiterminator sequence of the ribosomal RNA (rrn) operons. The chain is Transcription antitermination protein NusB from Anaeromyxobacter dehalogenans (strain 2CP-1 / ATCC BAA-258).